The following is a 474-amino-acid chain: Probable dipeptidase B (474 aa).

The active site involves C11.

This sequence belongs to the peptidase C69 family.

It catalyses the reaction an L-aminoacyl-L-amino acid + H2O = 2 an L-alpha-amino acid. In Lactococcus lactis subsp. lactis (strain IL1403) (Streptococcus lactis), this protein is Probable dipeptidase B (pepDB).